Consider the following 181-residue polypeptide: Photosystem I assembly protein Ycf4 (181 aa).

A run of 2 helical transmembrane segments spans residues 19–39 (YFWA…GISS) and 61–81 (IVMM…MATL).

This sequence belongs to the Ycf4 family.

The protein resides in the plastid. It localises to the chloroplast thylakoid membrane. Seems to be required for the assembly of the photosystem I complex. This chain is Photosystem I assembly protein Ycf4, found in Thalassiosira pseudonana (Marine diatom).